A 124-amino-acid polypeptide reads, in one-letter code: Small ribosomal subunit protein uS12 (124 aa).

Asp89 carries the 3-methylthioaspartic acid modification.

Belongs to the universal ribosomal protein uS12 family. As to quaternary structure, part of the 30S ribosomal subunit. Contacts proteins S8 and S17. May interact with IF1 in the 30S initiation complex.

With S4 and S5 plays an important role in translational accuracy. In terms of biological role, interacts with and stabilizes bases of the 16S rRNA that are involved in tRNA selection in the A site and with the mRNA backbone. Located at the interface of the 30S and 50S subunits, it traverses the body of the 30S subunit contacting proteins on the other side and probably holding the rRNA structure together. The combined cluster of proteins S8, S12 and S17 appears to hold together the shoulder and platform of the 30S subunit. The polypeptide is Small ribosomal subunit protein uS12 (Histophilus somni (strain 129Pt) (Haemophilus somnus)).